Consider the following 365-residue polypeptide: TD and POZ domain-containing protein 1 (365 aa).

The MATH domain maps to 19–149 (KFCYKWTISN…EDQLTICCKV (131 aa)). Residues 188 to 250 (TDCCLLVAGH…EMMGFIYTGK (63 aa)) enclose the BTB domain.

Belongs to the Tdpoz family.

This Mus musculus (Mouse) protein is TD and POZ domain-containing protein 1.